Reading from the N-terminus, the 141-residue chain is ATP synthase epsilon chain (141 aa).

It belongs to the ATPase epsilon chain family. F-type ATPases have 2 components, CF(1) - the catalytic core - and CF(0) - the membrane proton channel. CF(1) has five subunits: alpha(3), beta(3), gamma(1), delta(1), epsilon(1). CF(0) has three main subunits: a, b and c.

The protein localises to the cell inner membrane. In terms of biological role, produces ATP from ADP in the presence of a proton gradient across the membrane. The chain is ATP synthase epsilon chain from Paraburkholderia phytofirmans (strain DSM 17436 / LMG 22146 / PsJN) (Burkholderia phytofirmans).